The following is a 114-amino-acid chain: Cuticle protein CP1158 (114 aa).

Gln1 bears the Pyrrolidone carboxylic acid mark. 4 consecutive repeat copies span residues 1-17 (QVGY…NIQF), 26-43 (VLKG…NLQL), 70-87 (SVVG…VQFS), and 95-112 (VLVG…NLQL).

In terms of tissue distribution, calcified shell.

This Cancer pagurus (Rock crab) protein is Cuticle protein CP1158.